We begin with the raw amino-acid sequence, 511 residues long: 2-methylbutanal oxime monooxygenase (511 aa).

Helical transmembrane passes span Pro10–Phe30 and Ile304–Phe324. Cys451 contacts heme.

It belongs to the cytochrome P450 family. The cofactor is heme. Expressed in storage roots, primary roots, petioles and vascular tissues. Expressed in the outer cortex cells, the endodermis and around the xylem, phloem cells and laticifers.

It is found in the microsome membrane. The catalysed reaction is (1E,2S)-2-methylbutanal oxime + reduced [NADPH--hemoprotein reductase] + O2 = 2-hydroxy-2-methylbutanenitrile + oxidized [NADPH--hemoprotein reductase] + 2 H2O + H(+). It catalyses the reaction (E)-2-methylpropanal oxime + reduced [NADPH--hemoprotein reductase] + O2 = 2-hydroxy-2-methylpropanenitrile + oxidized [NADPH--hemoprotein reductase] + 2 H2O + H(+). In terms of biological role, catalyzes the conversion of (E)-2-methylpropanal oxime (valox) to 2-hydroxy-2-methylpropanenitrile (acetone cyanohydrin) and of (E)-2-methylbutanal oxime (ilox) to 2-hydroxy-2-methylbutyronitrile. The reaction takes place in three steps. First, the oxime is isomerized to the (Z)- isomer, next the (Z)-isomer is dehydrated to the corresponding nitrile, followed by a C-hydroxylation of the nitrile. Can use both aliphatic and aromatic oximes as substrates. The polypeptide is 2-methylbutanal oxime monooxygenase (CYP71E7) (Manihot esculenta (Cassava)).